The following is a 327-amino-acid chain: E3 ubiquitin-protein ligase SINAT4 (327 aa).

The segment at 1 to 27 (METDSMECVSSTGNEIHQNGNGHQSYQ) is disordered. Residues 8-27 (CVSSTGNEIHQNGNGHQSYQ) show a composition bias toward polar residues. An RING-type zinc finger spans residues 64–100 (CPVCTYSMYPPIHQCHNGHTLCSTCKVRVHNRCPTCR). Residues 114–307 (VAESLELPCK…KELKLRVTGK (194 aa)) are SBD. The segment at 117–177 (SLELPCKFYN…LVAHLRDDHK (61 aa)) adopts an SIAH-type zinc-finger fold. Zn(2+) contacts are provided by C122, C129, H141, C145, C152, C159, H171, and H176.

Belongs to the SINA (Seven in absentia) family. As to quaternary structure, interacts with SINAT6. Interacts with WAV3. Interacts with FREE1. Interacts with ELC/VPS23A.

The protein localises to the endosome. The protein resides in the multivesicular body. It localises to the cytoplasmic vesicle. Its subcellular location is the autophagosome. It catalyses the reaction S-ubiquitinyl-[E2 ubiquitin-conjugating enzyme]-L-cysteine + [acceptor protein]-L-lysine = [E2 ubiquitin-conjugating enzyme]-L-cysteine + N(6)-ubiquitinyl-[acceptor protein]-L-lysine.. It participates in protein modification; protein ubiquitination. Functionally, E3 ubiquitin-protein ligase that mediates ubiquitination and subsequent proteasomal degradation of target proteins. E3 ubiquitin ligases accept ubiquitin from an E2 ubiquitin-conjugating enzyme in the form of a thioester and then directly transfers the ubiquitin to targeted substrates. It probably triggers the ubiquitin-mediated degradation of different substrates. Modulates directly the ubiquitination and proteasomal-dependent degradation of FREE1, a component of the ESCRT-I complex. Modulates directly the ubiquitination and proteasomal-dependent degradation of ELC/VPS23A, a component of the ESCRT-I complex. In Arabidopsis thaliana (Mouse-ear cress), this protein is E3 ubiquitin-protein ligase SINAT4.